The following is a 218-amino-acid chain: Ras-related protein RabO (218 aa).

Residue 15 to 22 (GDYCVGKT) participates in GTP binding. Positions 37–45 (RNCNIGVDF) match the Effector region motif. Residues 63-67 (DTGGQ) and 122-125 (NKID) contribute to the GTP site. At Cys-215 the chain carries Cysteine methyl ester. Cys-215 is lipidated: S-geranylgeranyl cysteine. Residues 216–218 (FIL) constitute a propeptide, removed in mature form.

The protein belongs to the small GTPase superfamily. Rab family.

Its subcellular location is the cell membrane. This is Ras-related protein RabO (rabO) from Dictyostelium discoideum (Social amoeba).